Consider the following 431-residue polypeptide: Mothers against decapentaplegic homolog 6 (431 aa).

Positions M1 to R15 are enriched in basic residues. Residues M1–A95 form a disordered region. Residues G29–A38 are compositionally biased toward polar residues. Residues P71 to P90 show a composition bias toward pro residues. In terms of domain architecture, MH1 spans A85 to P209. Positions 139, 182, 194, and 199 each coordinate Zn(2+). Residues T235–V245 show a composition bias toward polar residues. The segment at T235–D258 is disordered. An MH2 domain is found at W265–R431.

It belongs to the dwarfin/SMAD family. Developing heart, eyes and limbs.

It localises to the nucleus. Transforming growth factor-beta superfamily receptors signaling occurs through the Smad family of intracellular mediators. SMAD6 is an inhibitory Smad (i-Smad) that negatively regulates signaling downstream of type I transforming growth factor-beta. Acts as a mediator of TGF-beta and BMP anti-inflammatory activities. Suppresses IL1R-TLR signaling through its direct interaction with PEL1, preventing NF-kappa-B activation, nuclear transport and NF-kappa-B-mediated expression of pro-inflammatory genes. Blocks the BMP-SMAD1 signaling pathway by competing with SMAD4 for receptor-activated SMAD1-binding. Binds to regulatory elements in target promoter regions. In Gallus gallus (Chicken), this protein is Mothers against decapentaplegic homolog 6 (SMAD6).